The chain runs to 160 residues: Glyoxalase domain-containing protein 5 (160 aa).

The 121-residue stretch at 33-153 (RLDHLVLTVR…DHNLIEVSNY (121 aa)) folds into the VOC domain.

It belongs to the glyoxalase I family.

The polypeptide is Glyoxalase domain-containing protein 5 (glod5) (Xenopus laevis (African clawed frog)).